Here is a 454-residue protein sequence, read N- to C-terminus: Bifunctional protein GlmU (454 aa).

The segment at 1-226 is pyrophosphorylase; sequence MALNVVILAA…AIEVEGANNR (226 aa). Residues 8-11, lysine 22, glutamine 73, 78-79, 100-102, glycine 137, glutamate 151, asparagine 166, and asparagine 224 contribute to the UDP-N-acetyl-alpha-D-glucosamine site; these read LAAG, GT, and YGD. Residue aspartate 102 coordinates Mg(2+). Asparagine 224 is a Mg(2+) binding site. A linker region spans residues 227–247; sequence VQLAQLERAYQAREAEKLMIA. The segment at 248–454 is N-acetyltransferase; it reads GANLRDPSRI…GWQRPVKIKK (207 aa). Residues arginine 330 and lysine 348 each contribute to the UDP-N-acetyl-alpha-D-glucosamine site. Catalysis depends on histidine 360, which acts as the Proton acceptor. UDP-N-acetyl-alpha-D-glucosamine-binding residues include tyrosine 363 and asparagine 374. Acetyl-CoA is bound by residues alanine 377, 383-384, serine 402, alanine 420, and arginine 437; that span reads NY.

The protein in the N-terminal section; belongs to the N-acetylglucosamine-1-phosphate uridyltransferase family. It in the C-terminal section; belongs to the transferase hexapeptide repeat family. As to quaternary structure, homotrimer. Mg(2+) serves as cofactor.

It localises to the cytoplasm. It carries out the reaction alpha-D-glucosamine 1-phosphate + acetyl-CoA = N-acetyl-alpha-D-glucosamine 1-phosphate + CoA + H(+). The enzyme catalyses N-acetyl-alpha-D-glucosamine 1-phosphate + UTP + H(+) = UDP-N-acetyl-alpha-D-glucosamine + diphosphate. Its pathway is nucleotide-sugar biosynthesis; UDP-N-acetyl-alpha-D-glucosamine biosynthesis; N-acetyl-alpha-D-glucosamine 1-phosphate from alpha-D-glucosamine 6-phosphate (route II): step 2/2. It functions in the pathway nucleotide-sugar biosynthesis; UDP-N-acetyl-alpha-D-glucosamine biosynthesis; UDP-N-acetyl-alpha-D-glucosamine from N-acetyl-alpha-D-glucosamine 1-phosphate: step 1/1. It participates in bacterial outer membrane biogenesis; LPS lipid A biosynthesis. Catalyzes the last two sequential reactions in the de novo biosynthetic pathway for UDP-N-acetylglucosamine (UDP-GlcNAc). The C-terminal domain catalyzes the transfer of acetyl group from acetyl coenzyme A to glucosamine-1-phosphate (GlcN-1-P) to produce N-acetylglucosamine-1-phosphate (GlcNAc-1-P), which is converted into UDP-GlcNAc by the transfer of uridine 5-monophosphate (from uridine 5-triphosphate), a reaction catalyzed by the N-terminal domain. The protein is Bifunctional protein GlmU of Shewanella oneidensis (strain ATCC 700550 / JCM 31522 / CIP 106686 / LMG 19005 / NCIMB 14063 / MR-1).